The following is a 732-amino-acid chain: MVSQGSSPSLLEALSSDFLACKICLEQLRVPKTLPCLHTYCQDCLAQLAEGSRLRCPECRESVPVPPAGVAAFKTNFFVNGLLDLVKARAGGDLRAGKPACALCPLMGGASAGGPATARCLDCADDLCQACADGHRCTRQTHSHRVVDLVGYRAGWYDEEARERQAAQCPQHPGEALRFLCQPCSQLLCRECRLDPHLDHPCLPLAEAVRARRPGLEELLAGVDNNLAELEATRLAEKEALARLREQAAKVVTQVEEASERVLRALLAQKQEVLGQLRAHVEAAEEGARERLGELEGQEQVAREAAAFARRVLSLGREAEILSLEGAIAQRLRQLQGCPWVPGPAPCQLPQLELYPGLLDKNCHLLRLSFEEQLPQKDSGKDGARSQGGDATQPQSRDGVQTPNQEDGAKTPKESRAQTPQEDGGTQARVGSRSNKKRKFKGRLKSVSREPSPAPGPNLEGSGLLPRPIFFCSFPTRMPGDKRAPRITGLCPFGSREILVADEQNRALKRFSLNGDYRGAVPVPEGCSPCSVAALQDTVAFSAAARLYLINHNGEVQWRRALSLCQASHAVAAMPSGDRVAVSVSGHVEVYNMEGSLATRFIPGGKANRGLRALVFLTTSPQGHFVGSDWQQNSLVVCDGLGQVVGEYRGPGLHGCQPGSVSVDKKGYIFLTLREVNKVVILDPKGSLLGDFLTAYHGLEKPRVTTMVDGRYLVVSLSNGTIHVFRVRPLDS.

Residues 21–60 form an RING-type zinc finger; that stretch reads CKICLEQLRVPKTLPCLHTYCQDCLAQLAEGSRLRCPECR. Residues 164-205 form a B box-type zinc finger; it reads RQAAQCPQHPGEALRFLCQPCSQLLCRECRLDPHLDHPCLPL. Zn(2+) is bound by residues Cys-169, His-172, Cys-192, and His-197. Positions 211 to 286 form a coiled coil; sequence ARRPGLEELL…LRAHVEAAEE (76 aa). The span at 374-384 shows a compositional bias: basic and acidic residues; it reads LPQKDSGKDGA. A disordered region spans residues 374 to 462; sequence LPQKDSGKDG…PAPGPNLEGS (89 aa). Residues 389 to 405 show a composition bias toward polar residues; it reads GDATQPQSRDGVQTPNQ. Position 402 is a phosphothreonine (Thr-402). The span at 407–416 shows a compositional bias: basic and acidic residues; that stretch reads DGAKTPKESR. At Thr-419 the chain carries Phosphothreonine. Over residues 434-446 the composition is skewed to basic residues; it reads SNKKRKFKGRLKS. At Ser-452 the chain carries Phosphoserine.

Belongs to the TRIM/RBCC family. Interacts with STING1. Interacts with TICAM1.

It is found in the cytoplasm. The catalysed reaction is S-ubiquitinyl-[E2 ubiquitin-conjugating enzyme]-L-cysteine + [acceptor protein]-L-lysine = [E2 ubiquitin-conjugating enzyme]-L-cysteine + N(6)-ubiquitinyl-[acceptor protein]-L-lysine.. It functions in the pathway protein modification; protein ubiquitination. Its function is as follows. E3 ubiquitin-protein ligase that plays a key role in innate antiviral immunity by mediating ubiquitination of CGAS and STING1. In response to pathogen- and host-derived double-stranded DNA (dsDNA), targets STING1 to 'Lys-63'-linked ubiquitination, thereby promoting its homodimerization, a step required for the production of type I interferon IFN-beta. Also mediate monoubiquitination of CGAS, thereby promoting CGAS oligomerization and subsequent activation. Independently of its E3 ubiquitin ligase activity, positive regulator of TLR3 signaling. Potentiates extracellular double stranded RNA (dsRNA)-induced expression of IFNB1 and interferon-stimulated genes ISG15, IFIT1/ISG56, CXCL10, OASL and CCL5/RANTES. Restricts bovine viral diarrhea virus (BVDV) replication. In Bos taurus (Bovine), this protein is E3 ubiquitin-protein ligase TRIM56.